A 355-amino-acid chain; its full sequence is Putative L-lysine 2,3-aminomutase (355 aa).

The 216-residue stretch at 93–308 (VHQYANRVLM…KERLSGLSLP (216 aa)) folds into the Radical SAM core domain. [4Fe-4S] cluster is bound by residues cysteine 108, cysteine 112, and cysteine 115. Lysine 320 is modified (N6-(pyridoxal phosphate)lysine).

This sequence belongs to the radical SAM superfamily. KamA family. [4Fe-4S] cluster is required as a cofactor. Pyridoxal 5'-phosphate serves as cofactor.

This chain is Putative L-lysine 2,3-aminomutase, found in Treponema pallidum (strain Nichols).